We begin with the raw amino-acid sequence, 146 residues long: Catabolic 3-dehydroquinase (146 aa).

Tyr-24 functions as the Proton acceptor in the catalytic mechanism. Substrate is bound by residues Asn-78, His-84, and Asp-91. The Proton donor role is filled by His-104. Substrate contacts are provided by residues 105–106 (IT) and Arg-115.

It belongs to the type-II 3-dehydroquinase family. Homododecamer. Adopts a ring-like structure, composed of an arrangement of two hexameric rings stacked on top of one another.

The enzyme catalyses 3-dehydroquinate = 3-dehydroshikimate + H2O. It functions in the pathway aromatic compound metabolism; 3,4-dihydroxybenzoate biosynthesis; 3,4-dihydroxybenzoate from 3-dehydroquinate: step 1/2. In terms of biological role, is involved in the catabolism of quinate. Allows the utilization of quinate as carbon source via the beta-ketoadipate pathway. The protein is Catabolic 3-dehydroquinase of Meyerozyma guilliermondii (strain ATCC 6260 / CBS 566 / DSM 6381 / JCM 1539 / NBRC 10279 / NRRL Y-324) (Yeast).